The chain runs to 227 residues: Endonuclease V (227 aa).

Mg(2+) is bound by residues D46 and D114.

The protein belongs to the endonuclease V family. Mg(2+) is required as a cofactor.

Its subcellular location is the cytoplasm. It catalyses the reaction Endonucleolytic cleavage at apurinic or apyrimidinic sites to products with a 5'-phosphate.. Its function is as follows. DNA repair enzyme involved in the repair of deaminated bases. Selectively cleaves double-stranded DNA at the second phosphodiester bond 3' to a deoxyinosine leaving behind the intact lesion on the nicked DNA. The chain is Endonuclease V from Alkalilimnicola ehrlichii (strain ATCC BAA-1101 / DSM 17681 / MLHE-1).